A 118-amino-acid polypeptide reads, in one-letter code: uncharacterized protein (118 aa).

A signal peptide spans 1 to 26; sequence MTKLKMLSMLTVMIASLFIFSSQALA. The region spanning 30 to 104 is the SH3b domain; it reads FTVSTSSGAP…VNIGYVSDTY (75 aa).

The protein to B.subtilis YraI.

This is an uncharacterized protein from Bacillus subtilis (strain 168).